The primary structure comprises 222 residues: Coiled-coil domain-containing protein 70 (222 aa).

Residues 129 to 153 (NALWERDRNLLQEDKALWEEEKALW) adopt a coiled-coil conformation.

The polypeptide is Coiled-coil domain-containing protein 70 (Homo sapiens (Human)).